Consider the following 161-residue polypeptide: Type II secretion system protein M (161 aa).

Residues 1–16 (MHNLLALWQQRTRRER) lie on the Cytoplasmic side of the membrane. The chain crosses the membrane as a helical span at residues 17-36 (CLLLGMAVVLLIGLVYYTLW). Over 37 to 161 (QPWQNREAQW…TLVLERSDEK (125 aa)) the chain is Periplasmic.

Belongs to the GSP M family. Type II secretion system is composed of four main components: the outer membrane complex, the inner membrane complex, the cytoplasmic secretion ATPase and the periplasm-spanning pseudopilus. Forms homodimers. Interacts with PulL/GspL. Interacts with PulE/GspE and PulF/GspF.

It is found in the cell inner membrane. In terms of biological role, inner membrane component of the type II secretion system required for the energy-dependent secretion of extracellular factors such as proteases and toxins from the periplasm. Plays a role in the complex assembly and recruits PulL resulting in a stable complex in the inner membrane. Provides thus a link between the energy-providing PulE protein in the cytoplasm and the rest of the T2SS machinery. This Klebsiella pneumoniae protein is Type II secretion system protein M (pulM).